Reading from the N-terminus, the 320-residue chain is MRQTKTGILLANLGTPDAPTPEAVKRYLKQFLSDRRVVDTSRLLWWPLLRGVILPLRSPRVAKLYASVWMEGGSPLMVYSRQQQQALAQRLPETPVALGMSYGSPSLESAVNELLAEHVDHIVVLPLYPQFSCSTVGAVWDELARILARKRSIPGISFIRDYADNHDYINALANSVRASFAKHGEPDLLLLSYHGIPQRYADEGDDYPQRCRTTTRELASALGMAPEKVMMTFQSRFGREPWLMPYTDETLKMLGEKGVGHIQVMCPGFAADCLETLEEIAEQNREVFLGAGGKKYEYIPALNATPEHIEMMANLVAAYR.

Fe cation is bound by residues His-194 and Glu-275.

This sequence belongs to the ferrochelatase family. Monomer.

Its subcellular location is the cytoplasm. The catalysed reaction is heme b + 2 H(+) = protoporphyrin IX + Fe(2+). It participates in porphyrin-containing compound metabolism; protoheme biosynthesis; protoheme from protoporphyrin-IX: step 1/1. Its function is as follows. Catalyzes the ferrous insertion into protoporphyrin IX. This Escherichia coli O8 (strain IAI1) protein is Ferrochelatase.